The sequence spans 523 residues: Synaptotagmin-10 (523 aa).

The Vesicular segment spans residues 1–55 (MSFRKEDGVSSLCQKALHIITELCFAGQVEWDKCSGIFPADRSGQGGGGTDISVS). The segment at 13-35 (CQKALHIITELCFAGQVEWDKCS) is cysteine motif. Residues 56–76 (LLAVVVSFCGLALLVVSLFVF) form a helical membrane-spanning segment. Topologically, residues 77 to 523 (WKLCWPCWKS…CSSPRPPSTP (447 aa)) are cytoplasmic. Thr-136 bears the Phosphothreonine mark. C2 domains lie at 231 to 352 (TCGK…TVWK) and 363 to 496 (DLGE…THWH). 11 residues coordinate Ca(2+): Asp-262, Asp-268, Asp-320, Phe-321, Asp-322, Ser-325, Asp-328, Asp-394, Asp-400, Asp-454, and Asp-456.

Belongs to the synaptotagmin family. As to quaternary structure, homodimer; disulfide-linked via the cysteine motif. Can also form heterodimers with SYT3, SYT6, SYT7 and SYT9. Requires Ca(2+) as cofactor.

The protein resides in the cytoplasmic vesicle. It is found in the secretory vesicle membrane. In terms of biological role, ca(2+) sensor specifically required for the Ca(2+)-dependent exocytosis of secretory vesicles containing IGF1 in neurons of the olfactory bulb. Exocytosis of IGF1 is required for sensory perception of smell. Not involved in Ca(2+)-dependent synaptic vesicle exocytosis. Acts through Ca(2+) and phospholipid binding to the C2 domain: Ca(2+) induces binding of the C2-domains to phospholipid membranes and to assembled SNARE-complexes; both actions contribute to triggering exocytosis. The chain is Synaptotagmin-10 (Syt10) from Rattus norvegicus (Rat).